A 365-amino-acid polypeptide reads, in one-letter code: Flagellar P-ring protein 2 (365 aa).

The N-terminal stretch at methionine 1–serine 19 is a signal peptide.

This sequence belongs to the FlgI family. The basal body constitutes a major portion of the flagellar organelle and consists of four rings (L,P,S, and M) mounted on a central rod.

It is found in the periplasm. It localises to the bacterial flagellum basal body. Functionally, assembles around the rod to form the L-ring and probably protects the motor/basal body from shearing forces during rotation. The sequence is that of Flagellar P-ring protein 2 from Chromobacterium violaceum (strain ATCC 12472 / DSM 30191 / JCM 1249 / CCUG 213 / NBRC 12614 / NCIMB 9131 / NCTC 9757 / MK).